Consider the following 271-residue polypeptide: MRASSEASLKAAADRWEPVLAEAGESARDLAESIFAVVDALDSSASLRRALTDPARPADAKASLTQGLLGAKAPDAVVDLVAGMSRSRWSADDDLASALEEIGTTSLLAAAESRGELERVEDELFRLGRSLIGARELRIALSNRELPVENRVALVDALLEGKVAPETELLVRRAATSMRERSVPNAIAHVGELAAARRRRLVAAVTAAVPLTQGQLTRLGEILERAYGRSVQINVGIDPEVVGGLRVQVGAEVVDATVLTKLEEARRRLAG.

This sequence belongs to the ATPase delta chain family. As to quaternary structure, F-type ATPases have 2 components, F(1) - the catalytic core - and F(0) - the membrane proton channel. F(1) has five subunits: alpha(3), beta(3), gamma(1), delta(1), epsilon(1). F(0) has three main subunits: a(1), b(2) and c(10-14). The alpha and beta chains form an alternating ring which encloses part of the gamma chain. F(1) is attached to F(0) by a central stalk formed by the gamma and epsilon chains, while a peripheral stalk is formed by the delta and b chains.

Its subcellular location is the cell membrane. F(1)F(0) ATP synthase produces ATP from ADP in the presence of a proton or sodium gradient. F-type ATPases consist of two structural domains, F(1) containing the extramembraneous catalytic core and F(0) containing the membrane proton channel, linked together by a central stalk and a peripheral stalk. During catalysis, ATP synthesis in the catalytic domain of F(1) is coupled via a rotary mechanism of the central stalk subunits to proton translocation. In terms of biological role, this protein is part of the stalk that links CF(0) to CF(1). It either transmits conformational changes from CF(0) to CF(1) or is implicated in proton conduction. The protein is ATP synthase subunit delta of Beutenbergia cavernae (strain ATCC BAA-8 / DSM 12333 / CCUG 43141 / JCM 11478 / NBRC 16432 / NCIMB 13614 / HKI 0122).